Here is a 46-residue protein sequence, read N- to C-terminus: Esculentin-1A (46 aa).

C40 and C46 are joined by a disulfide.

It belongs to the frog skin active peptide (FSAP) family. Brevinin subfamily. As to expression, expressed by the skin glands.

The protein localises to the secreted. Functionally, shows antibacterial activity against representative Gram-negative and Gram-positive bacterial species, and hemolytic activity. The polypeptide is Esculentin-1A (Pelophylax lessonae (Pool frog)).